The sequence spans 136 residues: DNA-directed RNA polymerase subunit omega (136 aa).

The protein belongs to the RNA polymerase subunit omega family. As to quaternary structure, the RNAP catalytic core consists of 2 alpha, 1 beta, 1 beta' and 1 omega subunit. When a sigma factor is associated with the core the holoenzyme is formed, which can initiate transcription.

The enzyme catalyses RNA(n) + a ribonucleoside 5'-triphosphate = RNA(n+1) + diphosphate. In terms of biological role, promotes RNA polymerase assembly. Latches the N- and C-terminal regions of the beta' subunit thereby facilitating its interaction with the beta and alpha subunits. In Acidiphilium cryptum (strain JF-5), this protein is DNA-directed RNA polymerase subunit omega.